The primary structure comprises 72 residues: Translation initiation factor IF-1 (72 aa).

Positions 1–72 (MAKKDVIELE…TRGRITWRKK (72 aa)) constitute an S1-like domain.

It belongs to the IF-1 family. As to quaternary structure, component of the 30S ribosomal translation pre-initiation complex which assembles on the 30S ribosome in the order IF-2 and IF-3, IF-1 and N-formylmethionyl-tRNA(fMet); mRNA recruitment can occur at any time during PIC assembly.

Its subcellular location is the cytoplasm. One of the essential components for the initiation of protein synthesis. Stabilizes the binding of IF-2 and IF-3 on the 30S subunit to which N-formylmethionyl-tRNA(fMet) subsequently binds. Helps modulate mRNA selection, yielding the 30S pre-initiation complex (PIC). Upon addition of the 50S ribosomal subunit IF-1, IF-2 and IF-3 are released leaving the mature 70S translation initiation complex. In Clostridioides difficile (strain 630) (Peptoclostridium difficile), this protein is Translation initiation factor IF-1.